The chain runs to 182 residues: Keratin, type II cytoskeletal 68 kDa, component IA (182 aa).

The IF rod domain occupies 1–66 (DAEQHGEVAL…TLLEGEECRM (66 aa)). A coil 2B region spans residues 1–66 (DAEQHGEVAL…TLLEGEECRM (66 aa)). Residues 67–86 (SGECQSSVSIEMVHNTTSSS) form an H2 subdomain region. The tail stretch occupies residues 67-182 (SGECQSSVSI…SQSQRSHHKL (116 aa)). The tract at residues 87–162 (SGGSGALGGG…GSCAVSGVGG (76 aa)) is V2 subdomain. The segment covering 104 to 124 (GSGGLGSGSLGSGRLGSGGRG) has biased composition (gly residues). Positions 104 to 182 (GSGGLGSGSL…SQSQRSHHKL (79 aa)) are disordered. 2 stretches are compositionally biased toward low complexity: residues 144 to 158 (VRGS…CAVS) and 165 to 176 (SVRVTQSSSQSQ). Residues 163 to 182 (RGSVRVTQSSSQSQRSHHKL) are E2 subdomain.

The protein belongs to the intermediate filament family. In terms of assembly, heterotetramer of two type I and two type II keratins.

The polypeptide is Keratin, type II cytoskeletal 68 kDa, component IA (Bos taurus (Bovine)).